Consider the following 866-residue polypeptide: N-alpha-acetyltransferase 15, NatA auxiliary subunit (866 aa).

4 TPR repeats span residues 46–79 (GETL…DLKS), 80–113 (HVCW…DKDN), 148–184 (RASW…SPDK), and 224–257 (LAVE…NPEN). Lys-262 is subject to N6-acetyllysine. The residue at position 302 (Ser-302) is a Phosphoserine. 3 TPR repeats span residues 374-407 (LWVQ…TPTL), 409-441 (ELFL…DTAD), and 485-518 (MWFQ…FIEI). The tract at residues 500 to 866 (KFGEALKKCH…AEAEELANEI (367 aa)) is interaction with HYPK. Residues Ser-537 and Ser-588 each carry the phosphoserine modification. Over residues 579–594 (EHEADTANMSDKELKK) the composition is skewed to basic and acidic residues. A disordered region spans residues 579-642 (EHEADTANMS…EEIGGPKEEL (64 aa)). The segment covering 595–604 (LRNKQRRAQK) has biased composition (basic residues). The span at 606–621 (AQIEEEKKNAEKEKQQ) shows a compositional bias: basic and acidic residues. The Bipartite nuclear localization signal motif lies at 612–629 (KKNAEKEKQQRNQKKKKD). The stretch at 672-705 (IETHLFAFEIYFRKEKFLLMLQSVKRAFAIDSSH) is one TPR 8 repeat. Lys-735 and Lys-756 each carry N6-acetyllysine. Phosphoserine is present on residues Ser-855 and Ser-856.

Component of the N-terminal acetyltransferase A complex (also called the NatA complex) composed of NAA10 and NAA15. Within the complex interacts with NAA10. Component of the N-terminal acetyltransferase A (NatA)/HYPK complex at least composed of NAA10, NAA15 and HYPK, which has N-terminal acetyltransferase activity. In complex with NAA10, interacts with HYPK. Component of the N-terminal acetyltransferase E (NatE) complex at least composed of NAA10, NAA15 and NAA50. Within the complex interacts with NAA10; the interaction is required for binding to NAA50. Interacts with NAAT50. The interaction of the NatA complex with NAA50 reduces the acetylation activity of the NatA complex. Component of the N-terminal acetyltransferase E (NatE)/HYPK complex at least composed of NAA10, NAA15, NAA50 and HYPK. In complex with NAA10 interacts with HYPK; the interaction with HYPK reduces the capacity of the NatA complex to interact with NAA50. Interacts with NAA11. Interacts with XRCC6 and XRCC5. Cleaved by caspases during apoptosis, resulting in a stable 35 kDa fragment. Expressed at high levels in testis and in ocular endothelial cells. Also found in brain (corpus callosum), heart, colon, bone marrow and at lower levels in most adult tissues, including thyroid, liver, pancreas, mammary and salivary glands, lung, ovary, urogenital system and upper gastrointestinal tract. Overexpressed in gastric cancer, in papillary thyroid carcinomas and in a Burkitt lymphoma cell line (Daudi). Specifically suppressed in abnormal proliferating blood vessels in eyes of patients with proliferative diabetic retinopathy.

The protein resides in the cytoplasm. It is found in the nucleus. In terms of biological role, auxillary subunit of N-terminal acetyltransferase complexes which display alpha (N-terminal) acetyltransferase (NAT) activity. The NAT activity may be important for vascular, hematopoietic and neuronal growth and development. Required to control retinal neovascularization in adult ocular endothelial cells. In complex with XRCC6 and XRCC5 (Ku80), up-regulates transcription from the osteocalcin promoter. The protein is N-alpha-acetyltransferase 15, NatA auxiliary subunit (NAA15) of Homo sapiens (Human).